The sequence spans 363 residues: Anhydro-N-acetylmuramic acid kinase (363 aa).

An ATP-binding site is contributed by 10-17 (GTSLDGMD).

The protein belongs to the anhydro-N-acetylmuramic acid kinase family.

It catalyses the reaction 1,6-anhydro-N-acetyl-beta-muramate + ATP + H2O = N-acetyl-D-muramate 6-phosphate + ADP + H(+). The protein operates within amino-sugar metabolism; 1,6-anhydro-N-acetylmuramate degradation. Its pathway is cell wall biogenesis; peptidoglycan recycling. Catalyzes the specific phosphorylation of 1,6-anhydro-N-acetylmuramic acid (anhMurNAc) with the simultaneous cleavage of the 1,6-anhydro ring, generating MurNAc-6-P. Is required for the utilization of anhMurNAc either imported from the medium or derived from its own cell wall murein, and thus plays a role in cell wall recycling. Contributes to intrinsic fosfomycin resistance in P.aeruginosa. This is Anhydro-N-acetylmuramic acid kinase from Pseudomonas aeruginosa (strain ATCC 15692 / DSM 22644 / CIP 104116 / JCM 14847 / LMG 12228 / 1C / PRS 101 / PAO1).